A 314-amino-acid chain; its full sequence is tRNA dimethylallyltransferase (314 aa).

Residue Gly-6–Thr-13 participates in ATP binding. Residue Thr-8 to Thr-13 coordinates substrate. An interaction with substrate tRNA region spans residues Asp-31–Gln-34.

It belongs to the IPP transferase family. In terms of assembly, monomer. Mg(2+) serves as cofactor.

It carries out the reaction adenosine(37) in tRNA + dimethylallyl diphosphate = N(6)-dimethylallyladenosine(37) in tRNA + diphosphate. Functionally, catalyzes the transfer of a dimethylallyl group onto the adenine at position 37 in tRNAs that read codons beginning with uridine, leading to the formation of N6-(dimethylallyl)adenosine (i(6)A). The chain is tRNA dimethylallyltransferase from Pseudothermotoga lettingae (strain ATCC BAA-301 / DSM 14385 / NBRC 107922 / TMO) (Thermotoga lettingae).